The following is a 344-amino-acid chain: N-acetyl-gamma-glutamyl-phosphate reductase (344 aa).

Cys148 is an active-site residue.

It belongs to the NAGSA dehydrogenase family. Type 1 subfamily.

The protein resides in the cytoplasm. It catalyses the reaction N-acetyl-L-glutamate 5-semialdehyde + phosphate + NADP(+) = N-acetyl-L-glutamyl 5-phosphate + NADPH + H(+). It participates in amino-acid biosynthesis; L-arginine biosynthesis; N(2)-acetyl-L-ornithine from L-glutamate: step 3/4. In terms of biological role, catalyzes the NADPH-dependent reduction of N-acetyl-5-glutamyl phosphate to yield N-acetyl-L-glutamate 5-semialdehyde. The sequence is that of N-acetyl-gamma-glutamyl-phosphate reductase from Geobacillus thermodenitrificans (strain NG80-2).